A 188-amino-acid polypeptide reads, in one-letter code: FMN-dependent NADPH-azoreductase (188 aa).

This sequence belongs to the azoreductase type 2 family. In terms of assembly, homotetramer. FMN is required as a cofactor.

Its function is as follows. Catalyzes the reductive cleavage of azo bond in aromatic azo compounds to the corresponding amines. Requires NADPH, but not NADH, as an electron donor for its activity. The sequence is that of FMN-dependent NADPH-azoreductase (azo1) from Staphylococcus haemolyticus (strain JCSC1435).